Here is a 590-residue protein sequence, read N- to C-terminus: Aspartate--tRNA(Asp/Asn) ligase (590 aa).

Glu-175 provides a ligand contact to L-aspartate. The aspartate stretch occupies residues 199-202 (QQYK). Residues Arg-221 and His-450 each coordinate L-aspartate. Residue 221–223 (RDE) coordinates ATP. Glu-484 is an ATP binding site. Arg-491 contributes to the L-aspartate binding site. 536 to 539 (GVDR) serves as a coordination point for ATP.

Belongs to the class-II aminoacyl-tRNA synthetase family. Type 1 subfamily. As to quaternary structure, homodimer.

It is found in the cytoplasm. It carries out the reaction tRNA(Asx) + L-aspartate + ATP = L-aspartyl-tRNA(Asx) + AMP + diphosphate. Its function is as follows. Aspartyl-tRNA synthetase with relaxed tRNA specificity since it is able to aspartylate not only its cognate tRNA(Asp) but also tRNA(Asn). Reaction proceeds in two steps: L-aspartate is first activated by ATP to form Asp-AMP and then transferred to the acceptor end of tRNA(Asp/Asn). This Rhodopseudomonas palustris (strain BisB5) protein is Aspartate--tRNA(Asp/Asn) ligase.